A 360-amino-acid chain; its full sequence is Peptide chain release factor 1 (360 aa).

Residue glutamine 237 is modified to N5-methylglutamine.

It belongs to the prokaryotic/mitochondrial release factor family. Methylated by PrmC. Methylation increases the termination efficiency of RF1.

It localises to the cytoplasm. Its function is as follows. Peptide chain release factor 1 directs the termination of translation in response to the peptide chain termination codons UAG and UAA. The sequence is that of Peptide chain release factor 1 from Ectopseudomonas mendocina (strain ymp) (Pseudomonas mendocina).